The chain runs to 402 residues: Endoglucanase 1 (402 aa).

The residue at position 1 (Gln1) is a Pyrrolidone carboxylic acid. Disulfide bonds link Cys18-Cys24, Cys51-Cys73, and Cys63-Cys69. Residue Asn89 is glycosylated (N-linked (GlcNAc...) asparagine). Disulfide bonds link Cys140/Cys365, Cys172/Cys195, Cys176/Cys194, Cys215/Cys234, Cys223/Cys228, and Cys239/Cys315. Glu197 acts as the Nucleophile in catalysis. Residue Glu202 is the Proton donor of the active site. Residue Asn247 is glycosylated (N-linked (GlcNAc...) asparagine).

This sequence belongs to the glycosyl hydrolase 7 (cellulase C) family. Monomer.

The protein resides in the secreted. The enzyme catalyses Endohydrolysis of (1-&gt;4)-beta-D-glucosidic linkages in cellulose, lichenin and cereal beta-D-glucans.. Its function is as follows. The biological conversion of cellulose to glucose generally requires three types of hydrolytic enzymes: (1) Endoglucanases which cut internal beta-1,4-glucosidic bonds; (2) Exocellobiohydrolases that cut the disaccharide cellobiose from the non-reducing end of the cellulose polymer chain; (3) Beta-1,4-glucosidases which hydrolyze the cellobiose and other short cello-oligosaccharides to glucose. This is Endoglucanase 1 (CEL7B) from Humicola insolens (Soft-rot fungus).